The chain runs to 153 residues: ORM1-like protein 3 (153 aa).

The tract at residues 1–17 is important for ceramide level-sensing; it reads MNVGTAHSEVNPNTRVM. Over 1–21 the chain is Cytoplasmic; that stretch reads MNVGTAHSEVNPNTRVMNSRG. The next 2 helical transmembrane spans lie at 22 to 42 and 43 to 63; these read IWLSYVLAIGLLHVVLLSIPF and VSVPVVWTLTNLIHNLGMYIF. Over 64–94 the chain is Cytoplasmic; sequence LHTVKGTPFETPDQGKARLLTHWEQMDYGVQ. The chain crosses the membrane as a helical span at residues 95 to 117; the sequence is FTASRKFLTITPIVLYFLTSFYT. The Extracellular segment spans residues 118 to 121; sequence KYDQ. A helical membrane pass occupies residues 122–142; sequence VHFILNTVSLMSVLIPKLPQL. Proline 137 is subject to Hydroxyproline. Over 143-153 the chain is Cytoplasmic; it reads HGVRIFGINKY.

The protein belongs to the ORM family. As to quaternary structure, ceramide-sensitive subunit of the serine palmitoyltransferase (SPT) complex, which is also composed of SPTLC1, SPTLC2/3 and SPTSSA/B. In terms of processing, when hydroxylated at Pro-137, ubiquitinated via 'Lys-48'-linkage, leading to proteasomal degradation. In endothelial cells, ORMDL3 proteasomal degradation is controlled by the sphingosine 1-phosphate receptor signaling pathway.

The protein localises to the endoplasmic reticulum membrane. In terms of biological role, plays an essential role in the homeostatic regulation of sphingolipid de novo biosynthesis by modulating the activity of the serine palmitoyltransferase (SPT) in response to ceramide levels. When complexed to SPT, the binding of ceramides to its N-terminus stabilizes a conformation that block SPT substrate entry, hence preventing SPT catalytic activity. Through this mechanism, maintains ceramide levels at sufficient concentrations for the production of complex sphingolipids, but which prevents the accumulation of ceramides to levels that trigger apoptosis. This Rattus norvegicus (Rat) protein is ORM1-like protein 3 (Ormdl3).